The following is a 677-amino-acid chain: Threonine--tRNA ligase (677 aa).

Positions 1–59 constitute a TGS domain; it reads MAQATISITVNGEAKEVEATTTGVELFAEDKNIIAVKINGENRDLYTPLNDGDTVDPIA. The interval 255–561 is catalytic; the sequence is DHRKLGAEMD…LLEHYAGAFP (307 aa). Zn(2+) is bound by residues cysteine 360, histidine 411, and histidine 538.

Belongs to the class-II aminoacyl-tRNA synthetase family. In terms of assembly, homodimer. Requires Zn(2+) as cofactor.

The protein localises to the cytoplasm. It catalyses the reaction tRNA(Thr) + L-threonine + ATP = L-threonyl-tRNA(Thr) + AMP + diphosphate + H(+). Its function is as follows. Catalyzes the attachment of threonine to tRNA(Thr) in a two-step reaction: L-threonine is first activated by ATP to form Thr-AMP and then transferred to the acceptor end of tRNA(Thr). Also edits incorrectly charged L-seryl-tRNA(Thr). The protein is Threonine--tRNA ligase of Bifidobacterium longum (strain DJO10A).